A 99-amino-acid polypeptide reads, in one-letter code: uncharacterized protein (99 aa).

Residues lysine 32–alanine 79 form the TM2 domain. 2 consecutive transmembrane segments (helical) span residues serine 34–glycine 54 and valine 56–isoleucine 76.

The protein resides in the cell membrane. This is an uncharacterized protein from Methanocaldococcus jannaschii (strain ATCC 43067 / DSM 2661 / JAL-1 / JCM 10045 / NBRC 100440) (Methanococcus jannaschii).